The following is a 604-amino-acid chain: Putative O-acetyltransferase SAR0937 (604 aa).

Helical transmembrane passes span 15-35, 43-63, 85-105, 150-170, 176-196, 212-232, 240-260, 267-287, 310-330, 332-352, and 377-397; these read YMPG…IYHL, GFLG…SLLL, LLPA…LLKS, AIEE…LLTI, IGFI…FIYS, LQTL…KLKN, YVID…FFII, IYDG…ASVV, YSLY…YVDG, IPVY…ELSY, and FIRM…LVGA. Residues Ser-459, Asp-581, and His-584 contribute to the active site.

The protein belongs to the acyltransferase 3 family.

The protein localises to the cell membrane. This Staphylococcus aureus (strain MRSA252) protein is Putative O-acetyltransferase SAR0937.